A 327-amino-acid chain; its full sequence is MAAVLEVEIGGEAVREAAGEEMDLSELAPEERWRVEHARMHAKHRGHEAMHAEMVLILIATLVVAQLLLVQWKQRHQRSYNMVTLFQMWIVPVYFTVKLHWWRFLGIWIVFSIITAYITYKATRKPLLQTTPRLVYKWFLLLYKMSYATGIVGYIAVMFTLFGLNLLFRIKPEDAMDFGISLLFYGLYYGVLGRDFAELCADYMASTIGFYSASGMPTKHLSDSVCAVCGQQIFVDVNEEGIIENTYRLSCNHVFHEFCIRGWCIVGKKQTCPYCKEKVDLKRMFSNPWERPHVMYGQLLDWLRYLVAWQPVIIGLVQGINYCLGLE.

The next 5 membrane-spanning stretches (helical) occupy residues 50–70 (MHAEMVLILIATLVVAQLLLV), 79–96 (SYNMVTLFQMWIVPVYFT), 99–119 (LHWWRFLGIWIVFSIITAYIT), 148–168 (ATGIVGYIAVMFTLFGLNLLF), and 173–193 (EDAMDFGISLLFYGLYYGVLG). An RING-type; atypical zinc finger spans residues 226 to 276 (CAVCGQQIFVDVNEEGIIENTYRLSCNHVFHEFCIRGWCIVGKKQTCPYCK).

It belongs to the RNF121 family.

It localises to the endoplasmic reticulum membrane. It carries out the reaction S-ubiquitinyl-[E2 ubiquitin-conjugating enzyme]-L-cysteine + [acceptor protein]-L-lysine = [E2 ubiquitin-conjugating enzyme]-L-cysteine + N(6)-ubiquitinyl-[acceptor protein]-L-lysine.. It participates in protein modification; protein ubiquitination. Its function is as follows. E3 ubiquitin ligase which accepts ubiquitin and transfers it to substrates thereby promoting their degradation by the endoplasmic reticulum-associated degradation (ERAD) pathway which is a pathway involved in ubiquitin-dependent degradation of misfolded endoplasmic reticulum proteins. May regulate the unfolded protein response to reduce endoplasmic reticulum stress. This is E3 ubiquitin ligase Rnf121 (rnf121) from Xenopus laevis (African clawed frog).